A 367-amino-acid polypeptide reads, in one-letter code: 3-isopropylmalate dehydrogenase (367 aa).

An NAD(+)-binding site is contributed by 77–90; sequence GPKYDDLDFSVKPE. Substrate is bound by residues Arg97, Arg107, Arg135, and Asp224. The Mg(2+) site is built by Asp224, Asp248, and Asp252. 287–299 contacts NAD(+); it reads GSAPDIAGQGKAN.

The protein belongs to the isocitrate and isopropylmalate dehydrogenases family. LeuB type 1 subfamily. In terms of assembly, homodimer. Requires Mg(2+) as cofactor. It depends on Mn(2+) as a cofactor.

It is found in the cytoplasm. It carries out the reaction (2R,3S)-3-isopropylmalate + NAD(+) = 4-methyl-2-oxopentanoate + CO2 + NADH. Its pathway is amino-acid biosynthesis; L-leucine biosynthesis; L-leucine from 3-methyl-2-oxobutanoate: step 3/4. Its function is as follows. Catalyzes the oxidation of 3-carboxy-2-hydroxy-4-methylpentanoate (3-isopropylmalate) to 3-carboxy-4-methyl-2-oxopentanoate. The product decarboxylates to 4-methyl-2 oxopentanoate. The protein is 3-isopropylmalate dehydrogenase of Ruegeria pomeroyi (strain ATCC 700808 / DSM 15171 / DSS-3) (Silicibacter pomeroyi).